Consider the following 189-residue polypeptide: MSIKSDRWIKRMAEQHAMIEPFEPGQIKHDAAGQRIVSFGTSSYGYDVRCSREFKVFTNINSTIVDPKHFDPGSFVDIESDVCIIPPNSFALARTVEYFRIPRDTLVVCLGKSTYARCGIIVNVTPLEPEWEGHVTLEFSNTTPLPARIYANEGVAQMLFFQSDEVCETSYKDRGGKYQGQTGVTLPRT.

Residues 112 to 117 (KSTYAR), 136 to 138 (TLE), Gln-157, Tyr-171, and Gln-181 each bind dCTP. Glu-138 acts as the Proton donor/acceptor in catalysis.

The protein belongs to the dCTP deaminase family. As to quaternary structure, homotrimer.

The enzyme catalyses dCTP + H2O + H(+) = dUTP + NH4(+). It functions in the pathway pyrimidine metabolism; dUMP biosynthesis; dUMP from dCTP (dUTP route): step 1/2. Functionally, catalyzes the deamination of dCTP to dUTP. This is dCTP deaminase from Xanthomonas axonopodis pv. citri (strain 306).